Here is a 359-residue protein sequence, read N- to C-terminus: DNA polymerase IV (359 aa).

Residues 4–185 (IIHVDMDCFF…LALIKIPGVG (182 aa)) enclose the UmuC domain. Positions 8 and 103 each coordinate Mg(2+). Glu104 is an active-site residue.

It belongs to the DNA polymerase type-Y family. In terms of assembly, monomer. The cofactor is Mg(2+).

The protein localises to the cytoplasm. It carries out the reaction DNA(n) + a 2'-deoxyribonucleoside 5'-triphosphate = DNA(n+1) + diphosphate. Its function is as follows. Poorly processive, error-prone DNA polymerase involved in untargeted mutagenesis. Copies undamaged DNA at stalled replication forks, which arise in vivo from mismatched or misaligned primer ends. These misaligned primers can be extended by PolIV. Exhibits no 3'-5' exonuclease (proofreading) activity. May be involved in translesional synthesis, in conjunction with the beta clamp from PolIII. This Shewanella loihica (strain ATCC BAA-1088 / PV-4) protein is DNA polymerase IV.